Here is a 475-residue protein sequence, read N- to C-terminus: CAAX prenyl protease 1 homolog (475 aa).

At 1 to 18 (MGMWASVDAMWDFPAEKR) the chain is on the lumenal side. A helical membrane pass occupies residues 19–39 (IFGAVLLFSWTVYLWETFLAQ). Topologically, residues 40–81 (RQRRIYKTTTRVPAELEQIMDSDTFEKSRLYQLDKSTFSFWS) are nuclear. The chain crosses the membrane as a helical span at residues 82–102 (GLYSEVEGTFILLFGGIPYLW). At 103–123 (RLSGQFCSSAGFGPEYEIIQS) the chain is on the lumenal side. The helical transmembrane segment at 124-144 (LVFLLLATLFSALTGLPWSLY) threads the bilayer. Residues 145–170 (NTFVIEEKHGFNHQTLEFFMKDAIKK) lie on the Nuclear side of the membrane. Residues 171–191 (FIVTQCILLPVSALLLYIIKI) traverse the membrane as a helical segment. Topologically, residues 192–195 (GGDY) are lumenal. A helical transmembrane segment spans residues 196 to 216 (FFIYAWLFTLVVSLVLVTIYA). Topologically, residues 217–347 (DYIAPLFDKF…GHWKLGHTVK (131 aa)) are nuclear. Positions 293–314 (DNQEESGMEARNEGEGDSEEVK) are disordered. The segment covering 300–314 (MEARNEGEGDSEEVK) has biased composition (basic and acidic residues). Zn(2+) is bound at residue histidine 335. The active site involves glutamate 336. Histidine 339 is a Zn(2+) binding site. The helical transmembrane segment at 348–368 (NIIISQMNSFLCFFLFAVLIG) threads the bilayer. Over 369-382 (RRELFAAFGFYDSQ) the chain is Lumenal. A helical transmembrane segment spans residues 383 to 405 (PTLIGLLIIFQFIFSPYNEVLSF). Topologically, residues 406–475 (CLTVLSRRFE…LQALKNAKQD (70 aa)) are nuclear. Position 415 (glutamate 415) interacts with Zn(2+).

It belongs to the peptidase M48A family. Zn(2+) serves as cofactor.

The protein localises to the endoplasmic reticulum membrane. It is found in the nucleus inner membrane. The protein resides in the early endosome membrane. Its subcellular location is the late endosome membrane. It catalyses the reaction Hydrolyzes the peptide bond -P2-(S-farnesyl or geranylgeranyl)C-P1'-P2'-P3'-COOH where P1' and P2' are amino acids with aliphatic side chains and P3' is any C-terminal residue.. Inhibited by HIV protease inhibitors, such as lopinavir, tipranavir and nelfinavir, leading to defects in lamin A/LMNA maturation and accumulation of prelamin-A/C precursors in cells. This causes defects in nuclear envelope integrity and release of DNA in the cytosol, activating the AIM2 inflammasome. Transmembrane metalloprotease whose catalytic activity is critical for processing lamin A/LMNA on the inner nuclear membrane and clearing clogged translocons on the endoplasmic reticulum. Proteolytically removes the C-terminal three residues of farnesylated proteins. Also plays an antiviral role independently of its protease activity by restricting enveloped RNA and DNA viruses. Mechanistically, controls IFITM antiviral pathway to hinder viruses from breaching the endosomal barrier by modulating membrane fluidity. The chain is CAAX prenyl protease 1 homolog from Mus musculus (Mouse).